A 762-amino-acid chain; its full sequence is N,N-dimethylformamidase beta subunit (762 aa).

In terms of assembly, heterotetramer of two DmfA1 (alpha) and two DmfA2 (beta) subunits.

It catalyses the reaction N,N-dimethylformamide + H2O = dimethylamine + formate. Functionally, hydrolyzes N,N-dimethylformamide, and to a lesser extent N,N-dimethylacetamide and N,N-diethylacetamide. Has no activity against the substituted amides N-methylformamide, N-ethylformamide, N-ethylformamide and N-methylacetamide or the unsubstituted amides formamide, nicotinamide, acetoamide, benzamide, acetamide and acrylamide. The sequence is that of N,N-dimethylformamidase beta subunit from Paracoccus aminophilus.